The chain runs to 153 residues: Probable ubiquitin-conjugating enzyme E2 C (153 aa).

A UBC core domain is found at 6–153 (SVSKRLQSEL…KRYQEATSRP (148 aa)). Cys90 acts as the Glycyl thioester intermediate in catalysis.

It belongs to the ubiquitin-conjugating enzyme family. Component of the APC/C complex. In terms of processing, autoubiquitinated by the APC/C complex, leading to its degradation by the proteasome.

The enzyme catalyses S-ubiquitinyl-[E1 ubiquitin-activating enzyme]-L-cysteine + [E2 ubiquitin-conjugating enzyme]-L-cysteine = [E1 ubiquitin-activating enzyme]-L-cysteine + S-ubiquitinyl-[E2 ubiquitin-conjugating enzyme]-L-cysteine.. Its pathway is protein modification; protein ubiquitination. Functionally, catalyzes the covalent attachment of ubiquitin to other proteins. Acts as an essential factor of the anaphase promoting complex/cyclosome (APC/C), a cell cycle-regulated ubiquitin ligase that controls progression through mitosis. Acts by initiating polyubiquitin chains on APC/C substrates, leading to the degradation of APC/C substrates by the proteasome and promoting mitotic exit. In Dictyostelium discoideum (Social amoeba), this protein is Probable ubiquitin-conjugating enzyme E2 C (ube2c).